The following is a 353-amino-acid chain: 3-isopropylmalate dehydrogenase (353 aa).

Substrate contacts are provided by Arg97, Arg107, Arg135, and Asp219. Mg(2+)-binding residues include Asp219, Asp243, and Asp247.

This sequence belongs to the isocitrate and isopropylmalate dehydrogenases family. LeuB type 1 subfamily. As to quaternary structure, homodimer. Requires Mg(2+) as cofactor. The cofactor is Mn(2+).

Its subcellular location is the cytoplasm. The catalysed reaction is (2R,3S)-3-isopropylmalate + NAD(+) = 4-methyl-2-oxopentanoate + CO2 + NADH. The protein operates within amino-acid biosynthesis; L-leucine biosynthesis; L-leucine from 3-methyl-2-oxobutanoate: step 3/4. Its function is as follows. Catalyzes the oxidation of 3-carboxy-2-hydroxy-4-methylpentanoate (3-isopropylmalate) to 3-carboxy-4-methyl-2-oxopentanoate. The product decarboxylates to 4-methyl-2 oxopentanoate. This chain is 3-isopropylmalate dehydrogenase, found in Bacteroides fragilis (strain ATCC 25285 / DSM 2151 / CCUG 4856 / JCM 11019 / LMG 10263 / NCTC 9343 / Onslow / VPI 2553 / EN-2).